Reading from the N-terminus, the 373-residue chain is Probable tRNA sulfurtransferase (373 aa).

Positions 54–158 constitute a THUMP domain; sequence NKNIEELSKV…NDVAYFYHKI (105 aa). Residues 176 to 177, 201 to 202, Lys-256, Gly-278, and Gln-287 each bind ATP; these read LF and NF.

This sequence belongs to the ThiI family.

The protein localises to the cytoplasm. The catalysed reaction is [ThiI sulfur-carrier protein]-S-sulfanyl-L-cysteine + a uridine in tRNA + 2 reduced [2Fe-2S]-[ferredoxin] + ATP + H(+) = [ThiI sulfur-carrier protein]-L-cysteine + a 4-thiouridine in tRNA + 2 oxidized [2Fe-2S]-[ferredoxin] + AMP + diphosphate. It catalyses the reaction [ThiS sulfur-carrier protein]-C-terminal Gly-Gly-AMP + S-sulfanyl-L-cysteinyl-[cysteine desulfurase] + AH2 = [ThiS sulfur-carrier protein]-C-terminal-Gly-aminoethanethioate + L-cysteinyl-[cysteine desulfurase] + A + AMP + 2 H(+). It functions in the pathway cofactor biosynthesis; thiamine diphosphate biosynthesis. Functionally, catalyzes the ATP-dependent transfer of a sulfur to tRNA to produce 4-thiouridine in position 8 of tRNAs, which functions as a near-UV photosensor. Also catalyzes the transfer of sulfur to the sulfur carrier protein ThiS, forming ThiS-thiocarboxylate. This is a step in the synthesis of thiazole, in the thiamine biosynthesis pathway. The sulfur is donated as persulfide by IscS. This chain is Probable tRNA sulfurtransferase, found in Saccharolobus islandicus (strain M.14.25 / Kamchatka #1) (Sulfolobus islandicus).